Here is a 134-residue protein sequence, read N- to C-terminus: D-dopachrome decarboxylase-like protein (134 aa).

This sequence belongs to the MIF family.

Its subcellular location is the cytoplasm. May have lyase activity. This is D-dopachrome decarboxylase-like protein (DDTL) from Homo sapiens (Human).